The primary structure comprises 539 residues: CTP synthase (539 aa).

The segment at 1–267 (MTKYIFVTGG…DQKVCDFLHI (267 aa)) is amidoligase domain. Ser-13 contacts CTP. Ser-13 contacts UTP. An ATP-binding site is contributed by 14 to 19 (SLGKGI). Tyr-54 contributes to the L-glutamine binding site. An ATP-binding site is contributed by Asp-71. Mg(2+) contacts are provided by Asp-71 and Glu-141. Residues 148-150 (DME), 188-193 (KTKPTQ), and Lys-224 each bind CTP. UTP is bound by residues 188-193 (KTKPTQ) and Lys-224. Positions 294 to 537 (KITLVGKYVE…IGAASGLPEQ (244 aa)) constitute a Glutamine amidotransferase type-1 domain. Gly-356 is an L-glutamine binding site. The active-site Nucleophile; for glutamine hydrolysis is the Cys-383. Residues 384 to 387 (LGMQ), Glu-407, and Arg-465 each bind L-glutamine. Residues His-510 and Glu-512 contribute to the active site.

This sequence belongs to the CTP synthase family. Homotetramer.

The catalysed reaction is UTP + L-glutamine + ATP + H2O = CTP + L-glutamate + ADP + phosphate + 2 H(+). It carries out the reaction L-glutamine + H2O = L-glutamate + NH4(+). It catalyses the reaction UTP + NH4(+) + ATP = CTP + ADP + phosphate + 2 H(+). Its pathway is pyrimidine metabolism; CTP biosynthesis via de novo pathway; CTP from UDP: step 2/2. Its activity is regulated as follows. Allosterically activated by GTP, when glutamine is the substrate; GTP has no effect on the reaction when ammonia is the substrate. The allosteric effector GTP functions by stabilizing the protein conformation that binds the tetrahedral intermediate(s) formed during glutamine hydrolysis. Inhibited by the product CTP, via allosteric rather than competitive inhibition. Functionally, catalyzes the ATP-dependent amination of UTP to CTP with either L-glutamine or ammonia as the source of nitrogen. Regulates intracellular CTP levels through interactions with the four ribonucleotide triphosphates. This Lactobacillus helveticus (strain DPC 4571) protein is CTP synthase.